The sequence spans 274 residues: 4-diphosphocytidyl-2-C-methyl-D-erythritol kinase (274 aa).

The active site involves Lys7. Residue 90–100 (PMGGGLGGGSS) coordinates ATP. Residue Asp132 is part of the active site.

It belongs to the GHMP kinase family. IspE subfamily.

The catalysed reaction is 4-CDP-2-C-methyl-D-erythritol + ATP = 4-CDP-2-C-methyl-D-erythritol 2-phosphate + ADP + H(+). The protein operates within isoprenoid biosynthesis; isopentenyl diphosphate biosynthesis via DXP pathway; isopentenyl diphosphate from 1-deoxy-D-xylulose 5-phosphate: step 3/6. Its function is as follows. Catalyzes the phosphorylation of the position 2 hydroxy group of 4-diphosphocytidyl-2C-methyl-D-erythritol. The chain is 4-diphosphocytidyl-2-C-methyl-D-erythritol kinase from Dechloromonas aromatica (strain RCB).